Here is a 68-residue protein sequence, read N- to C-terminus: MAGSSLTSASTSASKTLESAMGQSLTESANAQASKMKMDTQNSILDGKMDSASKSINSGHNAAKAIQF.

Residues 1–20 are compositionally biased toward low complexity; the sequence is MAGSSLTSASTSASKTLESA. A disordered region spans residues 1–68; that stretch reads MAGSSLTSAS…GHNAAKAIQF (68 aa). The span at 21-44 shows a compositional bias: polar residues; the sequence is MGQSLTESANAQASKMKMDTQNSI.

Belongs to the HrpA type 2 family.

The protein resides in the secreted. It localises to the fimbrium. Its function is as follows. Major structure protein of the hrp pilus, which is a component of the type III secretion system (T3SS, Hrp secretion system) required for effector protein delivery, parasitism, and pathogenicity. The hrp pilus functions as a conduit for protein delivery into the host cell. HrpA is required for the secretion of HrpN and DspA/E. The protein is Hrp pili protein HrpA (hrpA) of Erwinia amylovora (Fire blight bacteria).